The following is a 219-amino-acid chain: N-(5'-phosphoribosyl)anthranilate isomerase (219 aa).

This sequence belongs to the TrpF family.

The catalysed reaction is N-(5-phospho-beta-D-ribosyl)anthranilate = 1-(2-carboxyphenylamino)-1-deoxy-D-ribulose 5-phosphate. It participates in amino-acid biosynthesis; L-tryptophan biosynthesis; L-tryptophan from chorismate: step 3/5. The chain is N-(5'-phosphoribosyl)anthranilate isomerase from Bradyrhizobium sp. (strain BTAi1 / ATCC BAA-1182).